The primary structure comprises 675 residues: Probable potassium transport system protein Kup (675 aa).

Transmembrane regions (helical) follow at residues 12-32 (LGMLITLGVVYGDIGTSPLYV), 55-75 (VSLIFWTLMLITTVKYVLVAL), 98-118 (WLIFVALIGGAALLADGTLTP), 143-163 (WLVPLSVTLILVSLFTIQVLG), 170-190 (SFGPMMLLWFIVIGGIGLLNI), 216-236 (MGIFILGSVFLATTGAEALYS), 249-269 (TWPFVYAMLILNYLGQGAWML), 296-316 (IAMIVLATVAAIIASQALITG), 345-365 (IYIGAINWLLCLVTLSIVWLF), 374-394 (AYGLAITLTMLMTTILLSQWV), 401-421 (FWSLALLAGFGLLETLFLVAS), and 428-448 (GGYLTLGLTLMIFLIMVVWFF).

This sequence belongs to the HAK/KUP transporter (TC 2.A.72) family.

The protein resides in the cell membrane. The catalysed reaction is K(+)(in) + H(+)(in) = K(+)(out) + H(+)(out). In terms of biological role, transport of potassium into the cell. Likely operates as a K(+):H(+) symporter. The polypeptide is Probable potassium transport system protein Kup (Levilactobacillus brevis (strain ATCC 367 / BCRC 12310 / CIP 105137 / JCM 1170 / LMG 11437 / NCIMB 947 / NCTC 947) (Lactobacillus brevis)).